The following is a 550-amino-acid chain: Transcription factor 7-like 1-C (550 aa).

Over residues 1–11 the composition is skewed to gly residues; the sequence is MPQLNSGGGDE. The interaction with CTNNB1-A stretch occupies residues 1–60; that stretch reads MPQLNSGGGDELGANDELIRFKDEGEQEEKSPGEGSAEDLADVKSSLVNESENHSSDSDS. Disordered regions lie at residues 1 to 76, 182 to 206, and 390 to 473; these read MPQL…EKPR, GTPP…HPSE, and WSAR…SLTT. Basic and acidic residues-rich tracts occupy residues 17–32 and 51–76; these read ELIR…EKSP and SENH…EKPR. The interval 108–311 is interaction with AES and TLE4-A; that stretch reads LGGITCPMVP…SPNLSRKSNV (204 aa). Residues 323–391 constitute a DNA-binding region (HMG box); sequence IKKPLNAFML…LHSQLYPSWS (69 aa). Basic and acidic residues predominate over residues 406–415; sequence KQSPEMENYT. Positions 407–550 are interaction with CTBP-B; the sequence is QSPEMENYTK…PLSLVTRSSD (144 aa). Over residues 444 to 463 the composition is skewed to low complexity; the sequence is SPATPSAALASPAAPAATHS. Positions 464–473 are enriched in polar residues; that stretch reads EQAQPLSLTT.

The protein belongs to the TCF/LEF family. Interacts with csnk1e, ctnnb1-A, ctbp-B, dact1-A and gsk3b. May interact with ase and tle4-A. Post-translationally, phosphorylated. Phosphorylation by csnk1e promotes binding to ctnnb1-A while phosphorylation by gsk3b may reverse this effect.

The protein resides in the nucleus. Participates in the Wnt signaling pathway. Binds to DNA and acts as a repressor in the absence of ctnnb1-A and possibly ctnnb1-B, and as an activator in the presence of these proteins. Required early in development for the establishment of the dorsal body axis in response to maternal Wnt signaling. This chain is Transcription factor 7-like 1-C (tcf7l1-c), found in Xenopus laevis (African clawed frog).